A 140-amino-acid polypeptide reads, in one-letter code: Anti-sigma F factor (140 aa).

The protein belongs to the anti-sigma-factor family.

It catalyses the reaction L-seryl-[protein] + ATP = O-phospho-L-seryl-[protein] + ADP + H(+). The enzyme catalyses L-threonyl-[protein] + ATP = O-phospho-L-threonyl-[protein] + ADP + H(+). Binds to sigma F and blocks its ability to form an RNA polymerase holoenzyme (E-sigma F). Phosphorylates SpoIIAA on a serine residue. This phosphorylation may enable SpoIIAA to act as an anti-anti-sigma factor that counteracts SpoIIAB and thus releases sigma F from inhibition. In Clostridium perfringens (strain SM101 / Type A), this protein is Anti-sigma F factor.